The primary structure comprises 577 residues: Protein O-linked-mannose beta-1,4-N-acetylglucosaminyltransferase 2 (577 aa).

Over 1–4 (MNIA) the chain is Cytoplasmic. The helical; Signal-anchor for type II membrane protein transmembrane segment at 5–25 (AVFNALLVSVLATVLWKYIKL) threads the bilayer. Residues 26–577 (REHAFMVEEE…PFADVLLCST (552 aa)) lie on the Lumenal side of the membrane. 4 N-linked (GlcNAc...) asparagine glycosylation sites follow: Asn-98, Asn-275, Asn-335, and Asn-540. The Fibronectin type-III domain occupies 481–577 (KVRDARCQAS…PFADVLLCST (97 aa)).

The protein belongs to the glycosyltransferase 61 family.

It localises to the endoplasmic reticulum membrane. It catalyses the reaction 3-O-(alpha-D-mannosyl)-L-threonyl-[protein] + UDP-N-acetyl-alpha-D-glucosamine = 3-O-(N-acetyl-beta-D-glucosaminyl-(1-&gt;4)-alpha-D-mannosyl)-L-threonyl-[protein] + UDP + H(+). Its pathway is protein modification; protein glycosylation. O-linked mannose beta-1,4-N-acetylglucosaminyltransferase that transfers UDP-N-acetyl-D-glucosamine to the 4-position of the mannose to generate N-acetyl-D-glucosamine-beta-1,4-O-D-mannosylprotein. Involved in the biosynthesis of the phosphorylated O-mannosyl trisaccharide (N-acetylgalactosamine-beta-3-N-acetylglucosamine-beta-4-(phosphate-6-)mannose), a carbohydrate structure present in alpha-dystroglycan (DAG1), which is required for binding laminin G-like domain-containing extracellular proteins with high affinity. In Gallus gallus (Chicken), this protein is Protein O-linked-mannose beta-1,4-N-acetylglucosaminyltransferase 2 (POMGNT2).